Consider the following 427-residue polypeptide: Putative B3 domain-containing protein Os04g0346900 (427 aa).

2 consecutive DNA-binding regions (TF-B3) follow at residues L25–T118 and K140–N236. The disordered stretch occupies residues T253 to T309. Basic residues predominate over residues S263 to S273. The segment at residues W320–C427 is a DNA-binding region (TF-B3 3).

The protein localises to the nucleus. The sequence is that of Putative B3 domain-containing protein Os04g0346900 from Oryza sativa subsp. japonica (Rice).